Here is a 64-residue protein sequence, read N- to C-terminus: U9-ctenitoxin-Pr1a (64 aa).

5 disulfide bridges follow: Cys-3-Cys-15, Cys-9-Cys-24, Cys-14-Cys-47, Cys-34-Cys-55, and Cys-49-Cys-61.

Expressed by the venom gland.

The protein resides in the secreted. Functionally, non-toxic to mice and insects. The chain is U9-ctenitoxin-Pr1a from Phoneutria reidyi (Brazilian Amazonian armed spider).